Consider the following 281-residue polypeptide: L-cysteine S-thiosulfotransferase subunit SoxA (281 aa).

The first 25 residues, 1 to 25, serve as a signal peptide directing secretion; that stretch reads MTKHGFLLATLVLAGATLPIGPVTA. Cysteines 99 and 130 form a disulfide. The 107-residue stretch at 175–281 folds into the Cytochrome c domain; that stretch reads AAYEQGKRFY…LELNGPGARK (107 aa). Cys195 and His199 together coordinate heme. Arg238 is a binding site for substrate. Heme is bound at residue Cys242. The active-site Cysteine persulfide intermediate is the Cys242.

Belongs to the SoxA family. In terms of assembly, heterodimer of SoxA and SoxX. Heme is required as a cofactor. In terms of processing, cysteine persulfide at Cys-242.

The protein resides in the periplasm. The enzyme catalyses L-cysteinyl-[SoxY protein] + thiosulfate + 2 Fe(III)-[cytochrome c] = S-sulfosulfanyl-L-cysteinyl-[SoxY protein] + 2 Fe(II)-[cytochrome c] + 2 H(+). It catalyses the reaction S-sulfanyl-L-cysteinyl-[SoxY protein] + thiosulfate + 2 Fe(III)-[cytochrome c] = S-(2-sulfodisulfanyl)-L-cysteinyl-[SoxY protein] + 2 Fe(II)-[cytochrome c] + 2 H(+). Its function is as follows. C-type monoheme cytochrome, which is part of the SoxAX cytochrome complex involved in sulfur oxidation. The SoxAX complex catalyzes the formation of a heterodisulfide bond between the conserved cysteine residue on a sulfur carrier SoxYZ complex subunit SoxY and thiosulfate or other inorganic sulfur substrates. This leads to the intermediary formation of conspicuous sulfur globules inside of the cells. The sequence is that of L-cysteine S-thiosulfotransferase subunit SoxA from Allochromatium vinosum (Chromatium vinosum).